The primary structure comprises 307 residues: uncharacterized protein (307 aa).

One can recognise an ABC transporter domain in the interval 5-233 (VQTNGLTKTY…NTEYIELVTP (229 aa)). Position 37–44 (37–44 (GPNGAGKT)) interacts with ATP.

It belongs to the ABC transporter superfamily.

This is an uncharacterized protein from Bacillus subtilis (strain 168).